The chain runs to 359 residues: C-X-C chemokine receptor type 4 (359 aa).

The interval 1–23 (MEPISVSIYTSDNYSEEVGSGDY) is important for chemokine binding and signaling. Residues 1 to 40 (MEPISVSIYTSDNYSEEVGSGDYDSNKEPCFRDENVHFNR) are Extracellular-facing. Tyrosine 9 carries the post-translational modification Sulfotyrosine. Asparagine 13 carries N-linked (GlcNAc...) asparagine glycosylation. Residue tyrosine 14 is modified to Sulfotyrosine. An O-linked (Xyl...) (chondroitin sulfate) serine glycan is attached at serine 20. Tyrosine 23 is modified (sulfotyrosine). 2 disulfide bridges follow: cysteine 30–cysteine 281 and cysteine 111–cysteine 193. Residues 41–65 (IFLPTIYFIIFLTGIVGNGLVILVM) form a helical membrane-spanning segment. The Cytoplasmic portion of the chain corresponds to 66-79 (GYQKKLRSMTDKYR). The chain crosses the membrane as a helical span at residues 80–101 (LHLSVADLLFVITLPFWAVDAM). The chemokine binding stretch occupies residues 96–99 (WAVD). The Extracellular portion of the chain corresponds to 102–112 (ADWYFGKFLCK). A helical transmembrane segment spans residues 113 to 132 (AVHIIYTVNLYSSVLILAFI). The tract at residues 115–119 (HIIYT) is chemokine binding. At 133 to 156 (SLDRYLAIVHATNSQRPRKLLAEK) the chain is on the cytoplasmic side. The short motif at 135-137 (DRY) is the Important for signaling element. The tract at residues 137–149 (YLAIVHATNSQRP) is involved in dimerization; when bound to chemokine. Residues 157–176 (AVYVGVWIPALLLTIPDFIF) form a helical membrane-spanning segment. Residues 177–202 (ADVSQGDISQGDDRYICDRLYPDSLW) are Extracellular-facing. Residues 193 to 197 (CDRLY) are chemokine binding, important for signaling. Residues 198-217 (PDSLWMVVFQFQHIMVGLIL) form an involved in dimerization region. Residues 203-223 (MVVFQFQHIMVGLILPGIVIL) form a helical membrane-spanning segment. Topologically, residues 224–248 (SCYCIIISKLSHSKGHQKRKALKTT) are cytoplasmic. A helical membrane pass occupies residues 249–268 (VILILAFFACWLPYYVGISI). Topologically, residues 269-289 (DSFILLGVIKQGCDFESIVHK) are extracellular. Residues 273-275 (LLG) form an involved in dimerization region. Residues 290–309 (WISITEALAFFHCCLNPILY) traverse the membrane as a helical segment. The Cytoplasmic portion of the chain corresponds to 310 to 359 (AFLGAKFKSSAQHALNSMSRGSSLKILSKGKRGGHSSVSTESESSSFHSS). 2 positions are modified to phosphoserine: serine 326 and serine 328. Residues serine 331 and serine 332 each carry the phosphoserine; by PKC and GRK6 modification. The interval 335 to 359 (ILSKGKRGGHSSVSTESESSSFHSS) is disordered. Serine 337 is modified (phosphoserine; by GRK6). Lysine 338 participates in a covalent cross-link: Glycyl lysine isopeptide (Lys-Gly) (interchain with G-Cter in ubiquitin). Residues 344–359 (HSSVSTESESSSFHSS) are compositionally biased toward low complexity. Phosphoserine; by GRK6 is present on serine 346. A phosphoserine mark is found at serine 355 and serine 358.

This sequence belongs to the G-protein coupled receptor 1 family. In terms of assembly, monomer. Can form homodimers. Interacts with CD164. Interacts with ARRB2; the interaction is dependent on the C-terminal phosphorylation of CXCR4 and allows activation of MAPK1 and MAPK3. Interacts with ARR3; the interaction is dependent on the C-terminal phosphorylation of CXCR4 and modulates calcium mobilization. Interacts with RNF113A; the interaction, enhanced by CXCL12, promotes CXCR4 ubiquitination and subsequent degradation. Interacts (via the cytoplasmic C-terminal) with ITCH (via the WW domains I and II); the interaction, enhanced by CXCL12, promotes CXCR4 ubiquitination and leads to its degradation. Interacts with extracellular ubiquitin. Interacts with DBN1; this interaction is enhanced by antigenic stimulation. Following LPS binding, may form a complex with GDF5, HSP90AA1 and HSPA8. Post-translationally, phosphorylated on agonist stimulation. Rapidly phosphorylated on serine and threonine residues in the C-terminal. Phosphorylation at Ser-331 and Ser-332 leads to recruitment of ITCH, ubiquitination and protein degradation. Ubiquitinated after ligand binding, leading to its degradation. Ubiquitinated by ITCH at the cell membrane on agonist stimulation. The ubiquitin-dependent mechanism, endosomal sorting complex required for transport (ESCRT), then targets CXCR4 for lysosomal degradation. This process is dependent also on prior Ser-/Thr-phosphorylation in the C-terminal of CXCR4. Also binding of ARRB1 to STAM negatively regulates CXCR4 sorting to lysosomes though modulating ubiquitination of SFR5S. In terms of processing, sulfation is required for efficient binding of CXCL12/SDF-1alpha and promotes its dimerization. Post-translationally, O- and N-glycosylated. N-glycosylation can mask coreceptor function. The O-glycosylation chondroitin sulfate attachment does not affect interaction with CXCL12/SDF-1alpha nor its coreceptor activity. In terms of tissue distribution, lymphocytes, macrophages, neutrophils, microglial cells and astrocytes. Found in spleen, thymus, bone marrow, lymph nodes and, at lower levels in brain, small intestine, stomach and kidney. CXCR4-A is predominant in all tissues tested. During embryonic development, high levels are detected in the endothelium of developing blood vessels and in many regions of the developing brain including the olfactory epithelium, olfactory bulb, hippocampus, cerebellum and spinal cord.

It localises to the cell membrane. Its subcellular location is the cell junction. The protein resides in the early endosome. It is found in the late endosome. The protein localises to the lysosome. Functionally, receptor for the C-X-C chemokine CXCL12/SDF-1 that transduces a signal by increasing intracellular calcium ion levels and enhancing MAPK1/MAPK3 activation. Involved in the AKT signaling cascade. Plays a role in regulation of cell migration, e.g. during wound healing. Acts as a receptor for extracellular ubiquitin; leading to enhanced intracellular calcium ions and reduced cellular cAMP levels. Binds bacterial lipopolysaccharide (LPS) et mediates LPS-induced inflammatory response, including TNF secretion by monocytes. Involved in hematopoiesis and in cardiac ventricular septum formation. Also plays an essential role in vascularization of the gastrointestinal tract, probably by regulating vascular branching and/or remodeling processes in endothelial cells. Involved in cerebellar development. In the CNS, could mediate hippocampal-neuron survival. The chain is C-X-C chemokine receptor type 4 (Cxcr4) from Mus musculus (Mouse).